The following is a 166-amino-acid chain: Putative universal stress protein SE_1385 (166 aa).

The protein belongs to the universal stress protein A family.

The protein resides in the cytoplasm. The chain is Putative universal stress protein SE_1385 from Staphylococcus epidermidis (strain ATCC 12228 / FDA PCI 1200).